The following is a 424-amino-acid chain: UPF0597 protein Shewmr7_2876 (424 aa).

This sequence belongs to the UPF0597 family.

The sequence is that of UPF0597 protein Shewmr7_2876 from Shewanella sp. (strain MR-7).